Reading from the N-terminus, the 132-residue chain is Small ribosomal subunit protein uS8 (132 aa).

The protein belongs to the universal ribosomal protein uS8 family. In terms of assembly, part of the 30S ribosomal subunit. Contacts proteins S5 and S12.

One of the primary rRNA binding proteins, it binds directly to 16S rRNA central domain where it helps coordinate assembly of the platform of the 30S subunit. This is Small ribosomal subunit protein uS8 from Coprothermobacter proteolyticus (strain ATCC 35245 / DSM 5265 / OCM 4 / BT).